The primary structure comprises 300 residues: N-acetylmannosamine kinase (300 aa).

ATP-binding positions include 5–12 (ALDIGGTK) and 132–139 (GVGGGIVL). Residues His156, Cys166, Cys168, and Cys173 each coordinate Zn(2+).

It belongs to the ROK (NagC/XylR) family. NanK subfamily. Homodimer.

The enzyme catalyses an N-acyl-D-mannosamine + ATP = an N-acyl-D-mannosamine 6-phosphate + ADP + H(+). The protein operates within amino-sugar metabolism; N-acetylneuraminate degradation; D-fructose 6-phosphate from N-acetylneuraminate: step 2/5. Catalyzes the phosphorylation of N-acetylmannosamine (ManNAc) to ManNAc-6-P. The sequence is that of N-acetylmannosamine kinase from Haemophilus influenzae (strain PittEE).